Consider the following 249-residue polypeptide: Selenoprotein BthD (249 aa).

A disordered region spans residues 1–22; the sequence is MPPKRNKKAEAPIAERDAGEEL. A compositionally biased stretch (basic and acidic residues) spans 8–19; the sequence is KAEAPIAERDAG. The cysteinyl-selenocysteine (Cys-Sec); redox-active cross-link spans 34–37; sequence CRSU. A non-standard amino acid (selenocysteine) is located at residue Sec-37. The tract at residues 122–249 is disordered; it reads QQESKEQTNT…EATAGAKRRR (128 aa). Ser-147 bears the Phosphoserine mark. The segment covering 175 to 198 has biased composition (basic and acidic residues); sequence EQKSEEEPTQVDSKEAKQSKELVK. Residues 199–210 show a composition bias toward basic residues; it reads TKRQPKAQKKQA.

In terms of tissue distribution, expressed in the developing salivary gland at late stages of embryogenesis. Also expressed in brain, neuroblast and wing disk.

The protein resides in the cytoplasm. Its subcellular location is the secreted. May be involved in a redox-related process. Required for survival and specifically for salivary gland morphogenesis. This chain is Selenoprotein BthD (BthD), found in Drosophila melanogaster (Fruit fly).